Consider the following 114-residue polypeptide: Nucleoid-associated protein CKL_3826 (114 aa).

The protein belongs to the YbaB/EbfC family. Homodimer.

The protein resides in the cytoplasm. It localises to the nucleoid. Functionally, binds to DNA and alters its conformation. May be involved in regulation of gene expression, nucleoid organization and DNA protection. This chain is Nucleoid-associated protein CKL_3826, found in Clostridium kluyveri (strain ATCC 8527 / DSM 555 / NBRC 12016 / NCIMB 10680 / K1).